We begin with the raw amino-acid sequence, 211 residues long: Large ribosomal subunit protein uL4 (211 aa).

A disordered region spans residues 40–87 (QQAHTRQGTASTLTRSEVRGGGRKPYKQKGTGRARQGSIRTPLRPGGG). Residues 41-54 (QAHTRQGTASTLTR) show a composition bias toward polar residues. Residues 60 to 71 (GGRKPYKQKGTG) are compositionally biased toward basic residues.

The protein belongs to the universal ribosomal protein uL4 family. As to quaternary structure, part of the 50S ribosomal subunit.

In terms of biological role, one of the primary rRNA binding proteins, this protein initially binds near the 5'-end of the 23S rRNA. It is important during the early stages of 50S assembly. It makes multiple contacts with different domains of the 23S rRNA in the assembled 50S subunit and ribosome. Forms part of the polypeptide exit tunnel. In Synechococcus sp. (strain WH7803), this protein is Large ribosomal subunit protein uL4.